The chain runs to 477 residues: Ectonucleotide pyrophosphatase/phosphodiesterase family member 5 (477 aa).

A signal peptide spans 1-24; sequence MTSKFLLVSFILAALSLSTTFSLQ. Residues D36 and T72 each coordinate Zn(2+). T72 (nucleophile) is an active-site residue. N-linked (GlcNAc...) asparagine glycans are attached at residues N101 and N158. Zn(2+)-binding residues include D191, H195, D238, and H239. 2 N-linked (GlcNAc...) asparagine glycosylation sites follow: N292 and N329. H339 contributes to the Zn(2+) binding site. N-linked (GlcNAc...) asparagine glycans are attached at residues N362, N369, N382, and N389. Residues 432–452 traverse the membrane as a helical segment; it reads PYFIGVSLGSIIVIVFFVIFI.

The protein belongs to the nucleotide pyrophosphatase/phosphodiesterase family. The cofactor is Zn(2+). N-glycosylated.

The protein resides in the secreted. Its subcellular location is the membrane. Functionally, can hydrolyze NAD but cannot hydrolyze nucleotide di- and triphosphates. Lacks lysopholipase D activity. May play a role in neuronal cell communication. In Homo sapiens (Human), this protein is Ectonucleotide pyrophosphatase/phosphodiesterase family member 5.